The chain runs to 116 residues: UPF0342 protein LBA1592 (116 aa).

Belongs to the UPF0342 family.

The sequence is that of UPF0342 protein LBA1592 from Lactobacillus acidophilus (strain ATCC 700396 / NCK56 / N2 / NCFM).